The following is a 347-amino-acid chain: NADH-ubiquinone oxidoreductase chain 2 (347 aa).

Transmembrane regions (helical) follow at residues 3–23, 26–46, 67–87, 96–116, 149–169, 178–198, 200–220, 239–259, 274–294, and 325–345; these read PLIFIIIMFTLILGTVITMIS, WLLIWMGLEMNMFSMIPIIMM, SMLLMMGVIINLYYSGQWTIM, YMMTIALAMKLGLAPFHFWVP, LNLNLMLTLAILSILIGGWGG, IMAYSSIAHMGWMTAIIMYNT, LMMLNLVIYLMMTITMFALFI, ILTTMLLTTLLSLGGLPPLSG, NMLLLPTTMAIMALLNLYFYM, and LSPTLITLSTMLIPLTPMMLI.

This sequence belongs to the complex I subunit 2 family. Core subunit of respiratory chain NADH dehydrogenase (Complex I) which is composed of 45 different subunits. Interacts with TMEM242.

Its subcellular location is the mitochondrion inner membrane. The catalysed reaction is a ubiquinone + NADH + 5 H(+)(in) = a ubiquinol + NAD(+) + 4 H(+)(out). Functionally, core subunit of the mitochondrial membrane respiratory chain NADH dehydrogenase (Complex I) which catalyzes electron transfer from NADH through the respiratory chain, using ubiquinone as an electron acceptor. Essential for the catalytic activity and assembly of complex I. The polypeptide is NADH-ubiquinone oxidoreductase chain 2 (Dasypus novemcinctus (Nine-banded armadillo)).